Here is a 529-residue protein sequence, read N- to C-terminus: Delayed-rectifier potassium channel regulatory subunit KCNS1 (529 aa).

Topologically, residues 1 to 217 (MLMLLVRGTH…LTMENPGYSL (217 aa)) are cytoplasmic. The chain crosses the membrane as a helical span at residues 218–239 (PSKLFSCVSIGVVLASIAAMCI). The Extracellular portion of the chain corresponds to 240 to 270 (HSLPEYQAREAAAAVATVAAGRSAEDVRDDP). Residues 271 to 293 (VLRRLEYFCIAWFSFEVSSRLLL) traverse the membrane as a helical segment. Over 294 to 304 (APSTRNFFCHP) the chain is Cytoplasmic. The chain crosses the membrane as a helical span at residues 305 to 322 (LNLIDIVSVLPFYLTLLA). Residues 323 to 342 (SVALGGNNHGGTSGEELGHL) are Extracellular-facing. A helical; Voltage-sensor membrane pass occupies residues 343–363 (GKVVQVFRLMRIFRVLKLARH). Residues 364-378 (STGLRSLGATLKHSY) lie on the Cytoplasmic side of the membrane. A helical membrane pass occupies residues 379–400 (REVGILLLYLAVGVSVFSGVAY). Topologically, residues 401-413 (TAEKEEDVGFDTI) are extracellular. The helical intramembrane region spans 414–425 (PACWWWGTVSMT). The Selectivity filter motif lies at 426–431 (TVGYGD). Residues 426 to 433 (TVGYGDVV) lie within the membrane without spanning it. Residues 434-440 (PVTLAGK) are Extracellular-facing. A helical membrane pass occupies residues 441 to 469 (LAASGCILGGILVVALPITIIFNKFSHFY). Residues 470–529 (QRQKALEAAVRNSGHREFEDLLSSVDGVSDASLETSRETSQEGRSADLEAPSESPKPQIY) lie on the Cytoplasmic side of the membrane. Positions 498–529 (SDASLETSRETSQEGRSADLEAPSESPKPQIY) are disordered. The span at 504–516 (TSRETSQEGRSAD) shows a compositional bias: basic and acidic residues.

This sequence belongs to the potassium channel family. S (TC 1.A.1.2) subfamily. Kv9.1/KCNS1 sub-subfamily. In terms of assembly, heterotetramer with KCNB1. Heterotetramer with KCNB2. Does not form homomultimers.

The protein resides in the cell membrane. In terms of biological role, potassium channel regulatory subunit that modulate the delayed rectifier voltage-gated potassium channel activity of KCNB1 and KCNB2 by altering their kinetics, expression levels, and shifting the half-inactivation potential to more polarized values. While it does not form functional channels on its own, it can form functional heterotetrameric channels with KCNB1 and KCNB2. Each regulatory subunit has unique regulatory properties that can lead to extensive inhibition, significant changes in kinetics, and/or substantial shifts in the voltage dependencies of the inactivation process. The sequence is that of Delayed-rectifier potassium channel regulatory subunit KCNS1 from Lemur catta (Ring-tailed lemur).